The chain runs to 154 residues: Nuclear cap-binding protein subunit 2 (154 aa).

The segment at 1–23 (MTASVDLSSYRDQHFKGSRSEQE) is disordered. Basic and acidic residues predominate over residues 9-23 (SYRDQHFKGSRSEQE). MRNA-binding positions include Tyr10, Tyr33, 102-106 (RVDWD), 113-117 (RQYGR), and 123-124 (QV). The RRM domain maps to 30–108 (TTLYVGNLSF…RLIRVDWDAG (79 aa)).

The protein belongs to the RRM NCBP2 family. Component of the nuclear cap-binding complex (CBC), a heterodimer composed of Cbp80 and Cbp20 that interacts with m7GpppG-capped RNA. Interacts with Ars2.

It is found in the nucleus. Functionally, component of the cap-binding complex (CBC), which binds co-transcriptionally to the 5' cap of pre-mRNAs and is involved in various processes such as pre-mRNA splicing and RNA-mediated gene silencing (RNAi). The CBC complex is involved in miRNA-mediated RNA interference via its interaction with Ars2 and is required for primary microRNAs (miRNAs) processing. Also involved in innate immunity via the short interfering RNAs (siRNAs) processing machinery by restricting the viral RNA production. In the CBC complex, Cbp20 recognizes and binds capped RNAs (m7GpppG-capped RNA) but requires Cbp80 to stabilize the movement of its N-terminal loop and lock the CBC into a high affinity cap-binding state with the cap structure. The sequence is that of Nuclear cap-binding protein subunit 2 (Cbp20) from Drosophila grimshawi (Hawaiian fruit fly).